The sequence spans 161 residues: Nucleotide-binding protein Rmet_2899 (161 aa).

The protein belongs to the YajQ family.

Its function is as follows. Nucleotide-binding protein. This chain is Nucleotide-binding protein Rmet_2899, found in Cupriavidus metallidurans (strain ATCC 43123 / DSM 2839 / NBRC 102507 / CH34) (Ralstonia metallidurans).